A 260-amino-acid chain; its full sequence is MTHSQYIFGFHAITSRLRQHPDSIKEIYLDTNRHDQRARDLMSLAETTSTRLILCEQDRLCKMTGTTRHQGVAAHVTKLRRYATLEDLLEGLTEPALLLVLDGVKDPHNLGACLRVADAFGVHAVVVPKDRAVGLSATVHKVASGAVDTVPFFAVTNLARTLRELKEMGLWIVGTAADAPDTLDSVTLTRPLAWVLGAEDGGMRRLTREACDLLVSIPMSGSIESLNVSVSAGICLFETFRQHSQRTGSGLNVPAPKNAV.

Gly-197, Ile-217, and Leu-226 together coordinate S-adenosyl-L-methionine.

The protein belongs to the class IV-like SAM-binding methyltransferase superfamily. RNA methyltransferase TrmH family. RlmB subfamily.

It is found in the cytoplasm. The enzyme catalyses guanosine(2251) in 23S rRNA + S-adenosyl-L-methionine = 2'-O-methylguanosine(2251) in 23S rRNA + S-adenosyl-L-homocysteine + H(+). In terms of biological role, specifically methylates the ribose of guanosine 2251 in 23S rRNA. This is 23S rRNA (guanosine-2'-O-)-methyltransferase RlmB from Nitrosomonas europaea (strain ATCC 19718 / CIP 103999 / KCTC 2705 / NBRC 14298).